A 123-amino-acid chain; its full sequence is Protein Wnt-3a (123 aa).

The O-palmitoleoyl serine moiety is linked to residue Ser-1. A disulfide bridge links Cys-89 with Cys-104. A glycan (N-linked (GlcNAc...) asparagine) is linked at Asn-90.

This sequence belongs to the Wnt family. Post-translationally, disulfide bonds have critical and distinct roles in secretion and activity. Loss of each conserved cysteine results in high molecular weight oxidized Wnt oligomers, which are formed through inter-Wnt disulfide bonding. Palmitoleoylation is required for efficient binding to frizzled receptors. Depalmitoleoylation leads to Wnt signaling pathway inhibition.

Its subcellular location is the secreted. The protein localises to the extracellular space. It is found in the extracellular matrix. In terms of biological role, ligand for members of the frizzled family of seven transmembrane receptors. Functions in the canonical Wnt signaling pathway that results in activation of transcription factors of the TCF/LEF family. Required for normal embryonic mesoderm development and formation of caudal somites. Required for normal morphogenesis of the developing neural tube. This is Protein Wnt-3a (WNT-3A) from Plethodon jordani (Red-cheeked salamander).